A 264-amino-acid polypeptide reads, in one-letter code: Small ribosomal subunit protein eS4 (264 aa).

In terms of domain architecture, S4 RNA-binding spans 42 to 104; it reads LPLVIIMRNR…TNENFRLLYD (63 aa).

This sequence belongs to the eukaryotic ribosomal protein eS4 family.

Its subcellular location is the cytoplasm. This Solanum tuberosum (Potato) protein is Small ribosomal subunit protein eS4 (RPS4).